The following is a 342-amino-acid chain: Cytosolic Fe-S cluster assembly factor NBP35 (342 aa).

The segment at 16–42 (SKAAPKLVAPEPEHCPGPESEQAGKGD) is disordered. Positions 30, 44, 47, and 53 each coordinate [4Fe-4S] cluster. 83-90 (GKGGVGKS) contacts ATP. Residues Cys256 and Cys259 each contribute to the [4Fe-4S] cluster site.

It belongs to the Mrp/NBP35 ATP-binding proteins family. NUBP1/NBP35 subfamily. In terms of assembly, heterotetramer of 2 NBP35 and 2 CFD1 chains. [4Fe-4S] cluster serves as cofactor.

Its subcellular location is the cytoplasm. In terms of biological role, component of the cytosolic iron-sulfur (Fe/S) protein assembly (CIA) machinery. Required for maturation of extramitochondrial Fe-S proteins. The NBP35-CFD1 heterotetramer forms a Fe-S scaffold complex, mediating the de novo assembly of an Fe-S cluster and its transfer to target apoproteins. The chain is Cytosolic Fe-S cluster assembly factor NBP35 from Coccidioides immitis (strain RS) (Valley fever fungus).